A 358-amino-acid chain; its full sequence is tRNA-specific 2-thiouridylase MnmA (358 aa).

ATP contacts are provided by residues 6-13 (ALSGGVDS) and methionine 32. Cysteine 103 functions as the Nucleophile in the catalytic mechanism. A disulfide bridge links cysteine 103 with cysteine 201. Residue glycine 127 coordinates ATP. An interaction with tRNA region spans residues 151–153 (KDQ). Residue cysteine 201 is the Cysteine persulfide intermediate of the active site.

This sequence belongs to the MnmA/TRMU family.

The protein resides in the cytoplasm. The catalysed reaction is S-sulfanyl-L-cysteinyl-[protein] + uridine(34) in tRNA + AH2 + ATP = 2-thiouridine(34) in tRNA + L-cysteinyl-[protein] + A + AMP + diphosphate + H(+). In terms of biological role, catalyzes the 2-thiolation of uridine at the wobble position (U34) of tRNA, leading to the formation of s(2)U34. This Thermotoga petrophila (strain ATCC BAA-488 / DSM 13995 / JCM 10881 / RKU-1) protein is tRNA-specific 2-thiouridylase MnmA.